Here is a 572-residue protein sequence, read N- to C-terminus: Sulfite reductase [NADPH] hemoprotein beta-component (572 aa).

C437, C443, C482, and C486 together coordinate [4Fe-4S] cluster. C486 serves as a coordination point for siroheme.

It belongs to the nitrite and sulfite reductase 4Fe-4S domain family. As to quaternary structure, alpha(8)-beta(8). The alpha component is a flavoprotein, the beta component is a hemoprotein. Siroheme is required as a cofactor. The cofactor is [4Fe-4S] cluster.

The enzyme catalyses hydrogen sulfide + 3 NADP(+) + 3 H2O = sulfite + 3 NADPH + 4 H(+). Its pathway is sulfur metabolism; hydrogen sulfide biosynthesis; hydrogen sulfide from sulfite (NADPH route): step 1/1. In terms of biological role, component of the sulfite reductase complex that catalyzes the 6-electron reduction of sulfite to sulfide. This is one of several activities required for the biosynthesis of L-cysteine from sulfate. The protein is Sulfite reductase [NADPH] hemoprotein beta-component of Bacillus licheniformis (strain ATCC 14580 / DSM 13 / JCM 2505 / CCUG 7422 / NBRC 12200 / NCIMB 9375 / NCTC 10341 / NRRL NRS-1264 / Gibson 46).